The sequence spans 94 residues: Small ribosomal subunit protein uS19 (94 aa).

This sequence belongs to the universal ribosomal protein uS19 family.

Its function is as follows. Protein S19 forms a complex with S13 that binds strongly to the 16S ribosomal RNA. This is Small ribosomal subunit protein uS19 from Finegoldia magna (strain ATCC 29328 / DSM 20472 / WAL 2508) (Peptostreptococcus magnus).